Reading from the N-terminus, the 2628-residue chain is Hemagglutinin A (2628 aa).

An N-terminal signal peptide occupies residues Met-1–Ala-24. Peptidase C25-like stretches follow at residues Ala-25–Pro-539, Gly-540–Pro-995, Gly-996–Pro-1451, Gly-1452–Pro-1907, and Ile-2074–Lys-2628. Disordered stretches follow at residues Trp-493 to Ser-512, Ser-520 to Gly-546, Lys-944 to Gly-1002, Lys-1400 to Gly-1458, Lys-1856 to Phe-1881, Lys-1890 to Gly-1909, and Ser-2336 to Gly-2358. Residues Pro-496–Thr-508 are compositionally biased toward low complexity.

Belongs to the peptidase C25 family.

Functionally, agglutinates erythrocytes. The sequence is that of Hemagglutinin A (hagA) from Porphyromonas gingivalis (Bacteroides gingivalis).